The primary structure comprises 347 residues: Phosphate acyltransferase (347 aa).

This sequence belongs to the PlsX family. In terms of assembly, homodimer. Probably interacts with PlsY.

The protein localises to the cytoplasm. It carries out the reaction a fatty acyl-[ACP] + phosphate = an acyl phosphate + holo-[ACP]. It functions in the pathway lipid metabolism; phospholipid metabolism. Functionally, catalyzes the reversible formation of acyl-phosphate (acyl-PO(4)) from acyl-[acyl-carrier-protein] (acyl-ACP). This enzyme utilizes acyl-ACP as fatty acyl donor, but not acyl-CoA. The protein is Phosphate acyltransferase of Sinorhizobium medicae (strain WSM419) (Ensifer medicae).